The sequence spans 2009 residues: Sodium channel protein type 1 subunit alpha (2009 aa).

The Cytoplasmic portion of the chain corresponds to 1-128 (MEQTVLVPPG…KIAIKILVHS (128 aa)). A compositionally biased stretch (basic and acidic residues) spans 28–48 (RIAEEKAKNPKPDKKDDDENG). The segment at 28-60 (RIAEEKAKNPKPDKKDDDENGPKPNSDLEAGKN) is disordered. The stretch at 110–454 (ILTPFNPLRK…QQMIEQLKKQ (345 aa)) is one I repeat. A helical transmembrane segment spans residues 129–146 (LFSMLIMCTILTNCVFMT). At 147-152 (MSNPPD) the chain is on the extracellular side. A helical transmembrane segment spans residues 153-177 (WTKNVEYTFTGIYTFESLIKIIARG). Over 178 to 188 (FCLEDFTFLRD) the chain is Cytoplasmic. The helical transmembrane segment at 189–205 (PWNWLDFTVITFAYVTE) threads the bilayer. Topologically, residues 206–213 (FVDLGNVS) are extracellular. N-linked (GlcNAc...) asparagine glycosylation occurs at asparagine 211. A helical membrane pass occupies residues 214–235 (ALRTFRVLRALKTISVIPGLKT). The Cytoplasmic portion of the chain corresponds to 236 to 245 (IVGALIQSVK). A helical membrane pass occupies residues 246–269 (KLSDVMILTVFCLSVFALIGLQLF). At 270–369 (MGNLRNKCIQ…YGYTSFDTFS (100 aa)) the chain is on the extracellular side. 2 disulfides stabilise this stretch: cysteine 277/cysteine 345 and cysteine 336/cysteine 351. 5 N-linked (GlcNAc...) asparagine glycosylation sites follow: asparagine 284, asparagine 295, asparagine 301, asparagine 306, and asparagine 338. The segment at residues 370–384 (WAFLSLFRLMTQDFW) is an intramembrane region (pore-forming). The Extracellular portion of the chain corresponds to 385-397 (ENLYQLTLRAAGK). Residues 398–423 (TYMIFFVLVIFLGSFYLINLILAVVA) form a helical membrane-spanning segment. Residues 424–768 (MAYEEQNQAT…HVVNLVVMDP (345 aa)) are Cytoplasmic-facing. The segment at 455 to 529 (QEAAQQAATA…FQKSESEDSI (75 aa)) is disordered. Residues 456 to 466 (EAAQQAATATA) show a composition bias toward low complexity. A Phosphoserine modification is found at serine 470. Residues 479 to 492 (LSDSSSEASKLSSK) show a composition bias toward low complexity. Residues 495-506 (KERRNRRKKRKQ) are compositionally biased toward basic residues. The span at 520 to 529 (FQKSESEDSI) shows a compositional bias: basic and acidic residues. Serine 523, serine 525, serine 550, serine 551, serine 607, and serine 730 each carry phosphoserine. Residues 584–627 (VGSENDFADDEHSTFEDNESRRDSLFVPRRHGERRNSNLSQTSR) are disordered. Residues 593–607 (DEHSTFEDNESRRDS) are compositionally biased toward basic and acidic residues. Residues 750–1022 (CSPYWLKVKH…QIAVDRMHKG (273 aa)) form an II repeat. A helical membrane pass occupies residues 769–787 (FVDLAITICIVLNTLFMAM). Residues 788-797 (EHYPMTDHFN) are Extracellular-facing. Residues 798–820 (NVLTVGNLVFTGIFTAEMFLKII) traverse the membrane as a helical segment. Residues 821 to 830 (AMDPYYYFQE) are Cytoplasmic-facing. Residues 831–849 (GWNIFDGFIVTLSLVELGL) form a helical membrane-spanning segment. Over 850-854 (ANVEG) the chain is Extracellular. The chain crosses the membrane as a helical span at residues 855-874 (LSVLRSFRLLRVFKLAKSWP). Over 875–891 (TLNMLIKIIGNSVGALG) the chain is Cytoplasmic. The helical transmembrane segment at 892–912 (NLTLVLAIIVFIFAVVGMQLF) threads the bilayer. The Extracellular portion of the chain corresponds to 913–938 (GKSYKDCVCKIASDCQLPRWHMNDFF). Cysteines 921 and 927 form a disulfide. Positions 939–952 (HSFLIVFRVLCGEW) form an intramembrane region, pore-forming. Residues 953–965 (IETMWDCMEVAGQ) are Extracellular-facing. Cysteines 959 and 968 form a disulfide. The chain crosses the membrane as a helical span at residues 966–992 (AMCLTVFMMVMVIGNLVVLNLFLALLL). The Cytoplasmic segment spans residues 993-1218 (SSFSADNLAA…RTCFRIVEHN (226 aa)). The interval 1129–1163 (TEDFSSESDLEESKEKLNESSSSSEGSTVDIGAPV) is disordered. One copy of the III repeat lies at 1200-1514 (RGKQWWNLRR…KKYYNAMKKL (315 aa)). A helical membrane pass occupies residues 1219 to 1237 (WFETFIVFMILLSSGALAF). The Extracellular portion of the chain corresponds to 1238-1250 (EDIYIDQRKTIKT). Residues 1251 to 1276 (MLEYADKVFTYIFILEMLLKWVAYGY) traverse the membrane as a helical segment. Residues 1277–1278 (QT) are Cytoplasmic-facing. A helical membrane pass occupies residues 1279-1304 (YFTNAWCWLDFLIVDVSLVSLTANAL). Residues 1305–1313 (GYSELGAIK) are Extracellular-facing. The helical transmembrane segment at 1314–1332 (SLRTLRALRPLRALSRFEG) threads the bilayer. Residues 1333–1345 (MRVVVNALLGAIP) lie on the Cytoplasmic side of the membrane. Residues 1346-1369 (SIMNVLLVCLIFWLIFSIMGVNLF) traverse the membrane as a helical segment. At 1370-1415 (AGKFYHCINTTTGDRFDIEDVNNHTDCLKLIERNETARWKNVKVNF) the chain is on the extracellular side. Cysteine 1376 and cysteine 1396 form a disulfide bridge. Residues asparagine 1378, asparagine 1392, and asparagine 1403 are each glycosylated (N-linked (GlcNAc...) asparagine). The pore-forming intramembrane region spans 1416–1433 (DNVGFGYLSLLQVATFKG). The Extracellular portion of the chain corresponds to 1434–1457 (WMDIMYAAVDSRNVELQPKYEESL). The helical transmembrane segment at 1458–1483 (YMYLYFVIFIIFGSFFTLNLFIGVII) threads the bilayer. Residues 1484-1541 (DNFNQQKKKFGGQDIFMTEEQKKYYNAMKKLGSKKPQKPIPRPGNKFQGMVFDFVTRQ) are Cytoplasmic-facing. Serine 1516 carries the post-translational modification Phosphoserine; by PKC. The stretch at 1523-1821 (IPRPGNKFQG…WEKFDPDATQ (299 aa)) is one IV repeat. A helical membrane pass occupies residues 1542-1560 (VFDISIMILICLNMVTMMV). Residues 1561-1571 (ETDDQSEYVTT) are Extracellular-facing. Residues 1561 to 1571 (ETDDQSEYVTT) form an S1-S2 loop of repeat IV region. A helical transmembrane segment spans residues 1572–1593 (ILSRINLVFIVLFTGECVLKLI). The Cytoplasmic portion of the chain corresponds to 1594 to 1601 (SLRHYYFT). A helical transmembrane segment spans residues 1602–1623 (IGWNIFDFVVVILSIVGMFLAE). The segment at 1619–1636 (MFLAELIEKYFVSPTLFR) is S3b-S4 loop of repeat IV. Residues 1624–1636 (LIEKYFVSPTLFR) lie on the Extracellular side of the membrane. The helical transmembrane segment at 1637-1655 (VIRLARIGRILRLIKGAKG) threads the bilayer. Residues 1656–1665 (IRTLLFALMM) are Cytoplasmic-facing. The chain crosses the membrane as a helical span at residues 1666 to 1688 (SLPALFNIGLLLFLVMFIYAIFG). The Extracellular segment spans residues 1689–1711 (MSNFAYVKREVGIDDMFNFETFG). Residues 1712-1726 (NSMICLFQITTSAGW) constitute an intramembrane region (pore-forming). The Extracellular portion of the chain corresponds to 1727-1759 (DGLLAPILNSKPPDCDPNKVNPGSSVKGDCGNP). A disulfide bridge links cysteine 1741 with cysteine 1756. The helical transmembrane segment at 1760-1788 (SVGIFFFVSYIIISFLVVVNMYIAVILEN) threads the bilayer. Topologically, residues 1789 to 2009 (FSVATEESAE…EGKDEKAKGK (221 aa)) are cytoplasmic. Positions 1915–1944 (EEVSAVIIQRAYRRHLLKRTVKQASFTYNK) constitute an IQ domain. The segment at 1986–2009 (YDRVTKPIVEKHEQEGKDEKAKGK) is disordered. A compositionally biased stretch (basic and acidic residues) spans 1988-2009 (RVTKPIVEKHEQEGKDEKAKGK).

Belongs to the sodium channel (TC 1.A.1.10) family. Nav1.1/SCN1A subfamily. The Nav1.1 voltage-gated sodium channel consists of an ion-conducting alpha subunit SCN1A which is functional on its own regulated by one or more beta-1 (SCN1B), beta-2 (SCN2B), beta-3 (SCN3B) and beta-4 (SCN4B) subunits. SCN1B and SCN3B are non-covalently associated with SCN1A. SCN2B and SCN4B are disulfide-linked to SCN1A. SCN1B regulates both the expression at the plasma membrane and the voltage dependence of Nav1.1 inactivation. SCN3B and SCN4B reduce Nav1.1 conductance. Probably interacts with TMEM233; modulates the gating properties of NaV1.1. Interacts with FGF13; regulates the steady-state inactivation of Nav.1.1. In terms of processing, phosphorylation at Ser-1516 by PKC in a highly conserved cytoplasmic loop slows inactivation of the sodium channel and reduces peak sodium currents.

It is found in the cell membrane. It carries out the reaction Na(+)(in) = Na(+)(out). Its activity is regulated as follows. Activated by the spider toxins Hm1a and Hm1b (H.maculata, AC P60992 and AC P0DOC5) eliciting acute pain and mechanical allodynia. Inhibited by the conotoxin GVIIJ. Inhibited by the spider beta/delta-theraphotoxin-Pre1a. Its function is as follows. Pore-forming subunit of Nav1.1, a voltage-gated sodium (Nav) channel that directly mediates the depolarizing phase of action potentials in excitable membranes. Navs, also called VGSCs (voltage-gated sodium channels) or VDSCs (voltage-dependent sodium channels), operate by switching between closed and open conformations depending on the voltage difference across the membrane. In the open conformation they allow Na(+) ions to selectively pass through the pore, along their electrochemical gradient. The influx of Na(+) ions provokes membrane depolarization, initiating the propagation of electrical signals throughout cells and tissues. By regulating the excitability of neurons, ensures that they respond appropriately to synaptic inputs, maintaining the balance between excitation and inhibition in brain neural circuits. Nav1.1 plays a role in controlling the excitability and action potential propagation from somatosensory neurons, thereby contributing to the sensory perception of mechanically-induced pain. In Homo sapiens (Human), this protein is Sodium channel protein type 1 subunit alpha.